Reading from the N-terminus, the 105-residue chain is uncharacterized protein (105 aa).

The protein belongs to the EspC family.

Functionally, may be involved in assembly of the ESX-1 / type VII specialized secretion system (T7SS), which exports several proteins including EsxA and EsxB. Involved in DNA conjugation, in at least recipient strain. This is an uncharacterized protein from Mycolicibacterium smegmatis (strain MKD8) (Mycobacterium smegmatis).